The chain runs to 428 residues: 3-phosphoshikimate 1-carboxyvinyltransferase (428 aa).

Lysine 20, serine 21, and arginine 25 together coordinate 3-phosphoshikimate. A phosphoenolpyruvate-binding site is contributed by lysine 20. Residues glycine 92 and arginine 120 each contribute to the phosphoenolpyruvate site. Residues serine 166, glutamine 168, aspartate 314, and lysine 341 each contribute to the 3-phosphoshikimate site. A phosphoenolpyruvate-binding site is contributed by glutamine 168. The Proton acceptor role is filled by aspartate 314. Residues arginine 345 and arginine 387 each contribute to the phosphoenolpyruvate site.

It belongs to the EPSP synthase family. As to quaternary structure, monomer.

It localises to the cytoplasm. The enzyme catalyses 3-phosphoshikimate + phosphoenolpyruvate = 5-O-(1-carboxyvinyl)-3-phosphoshikimate + phosphate. Its pathway is metabolic intermediate biosynthesis; chorismate biosynthesis; chorismate from D-erythrose 4-phosphate and phosphoenolpyruvate: step 6/7. In terms of biological role, catalyzes the transfer of the enolpyruvyl moiety of phosphoenolpyruvate (PEP) to the 5-hydroxyl of shikimate-3-phosphate (S3P) to produce enolpyruvyl shikimate-3-phosphate and inorganic phosphate. The sequence is that of 3-phosphoshikimate 1-carboxyvinyltransferase from Listeria monocytogenes serovar 1/2a (strain ATCC BAA-679 / EGD-e).